We begin with the raw amino-acid sequence, 110 residues long: HTH-type transcriptional regulator TnrA (110 aa).

The HTH merR-type domain maps to valine 13–lysine 81. The segment at residues isoleucine 16 to glutamate 35 is a DNA-binding region (H-T-H motif).

In terms of assembly, homodimer. Under conditions of nitrogen excess, TnrA forms a stable complex with feedback-inhibited GlnA. Interacts with GlnK-AmtB complex.

It is found in the cell membrane. Its activity is regulated as follows. Under conditions of nitrogen excess, the DNA-binding activity is inhibited by the formation of a stable complex with feedback-inhibited GlnA. The presence of glutamine and AMP increases the inhibitory activity of glutamine synthetase by more than 1000-fold. Functionally, transcription regulator that actives the transcription of genes required for nitrogen assimilation such as nrgAB (ammonium transport), nasABCDEF (nitrate/nitrite assimilation), ureABC (urea degradation) and gabP (GABA transport), during nitrogen limitation. Also represses glnRA and gltAB in the absence of ammonium. On the contrary of the MerR members, which require longer DNA sites for high-affinity binding, TnrA requires a DNA sequence of 17 nucleotides as minimal binding site. This Bacillus subtilis (strain 168) protein is HTH-type transcriptional regulator TnrA.